The chain runs to 563 residues: Cysteine--tRNA ligase, chloroplastic/mitochondrial (563 aa).

Position 91 (Cys-91) interacts with Zn(2+). Gly-92 serves as a coordination point for L-cysteine. The 'HIGH' region motif lies at Val-93–His-103. Thr-131 serves as a coordination point for L-cysteine. A 'KIIK' region motif is present at residues Lys-136–Ala-139. 3 residues coordinate Zn(2+): Cys-271, His-296, and Glu-300. His-296 is a binding site for L-cysteine. Positions Lys-328 to Ser-332 match the 'KMSKS' region motif. Lys-331 is a binding site for ATP.

The protein belongs to the class-I aminoacyl-tRNA synthetase family. Zn(2+) serves as cofactor.

It is found in the plastid. Its subcellular location is the chloroplast. It localises to the mitochondrion. It carries out the reaction tRNA(Cys) + L-cysteine + ATP = L-cysteinyl-tRNA(Cys) + AMP + diphosphate. In terms of biological role, required for female gametophyte development. Is necessary for the fusion of central cell nuclei and programmed cell death (PCD) of the antipodals. This chain is Cysteine--tRNA ligase, chloroplastic/mitochondrial, found in Arabidopsis thaliana (Mouse-ear cress).